The sequence spans 305 residues: Glycine--tRNA ligase alpha subunit (305 aa).

It belongs to the class-II aminoacyl-tRNA synthetase family. As to quaternary structure, tetramer of two alpha and two beta subunits.

Its subcellular location is the cytoplasm. It carries out the reaction tRNA(Gly) + glycine + ATP = glycyl-tRNA(Gly) + AMP + diphosphate. In Streptococcus sanguinis (strain SK36), this protein is Glycine--tRNA ligase alpha subunit.